The following is a 158-amino-acid chain: Large ribosomal subunit protein uL15 (158 aa).

Positions 1-13 (MKLNEIKDNEGST) are enriched in basic and acidic residues. The segment at 1–45 (MKLNEIKDNEGSTHSRKRLGRGIGSGSGKTGGRGVKGQKSRSGVA) is disordered. The span at 21–35 (RGIGSGSGKTGGRGV) shows a compositional bias: gly residues.

The protein belongs to the universal ribosomal protein uL15 family. Part of the 50S ribosomal subunit.

Its function is as follows. Binds to the 23S rRNA. The sequence is that of Large ribosomal subunit protein uL15 from Rhizobium johnstonii (strain DSM 114642 / LMG 32736 / 3841) (Rhizobium leguminosarum bv. viciae).